Reading from the N-terminus, the 99-residue chain is MLLMNLQLFAHKKGVGSSKNGRDSESKRLGTKCGDGQFVLAGNILVRQRGTKIHPGVNVGRGGDDTLYAKVDGIVKYERVGRSKKQASVYPVEIENVAE.

Residues Met-1–Phe-9 constitute a propeptide that is removed on maturation.

The protein belongs to the bacterial ribosomal protein bL27 family. In terms of processing, the N-terminus is cleaved by ribosomal processing cysteine protease Prp.

The polypeptide is Large ribosomal subunit protein bL27 (Clostridium novyi (strain NT)).